The following is a 110-amino-acid chain: U9-agatoxin-Ao1a (110 aa).

The signal sequence occupies residues 1 to 17; sequence MKLLLAIAGLFLVQTLA. A propeptide spanning residues 18–38 is cleaved from the precursor; that stretch reads EDVRAHEESSFLAAVAPEEQR. 5 disulfide bridges follow: Cys-40/Cys-54, Cys-47/Cys-60, Cys-51/Cys-87, Cys-53/Cys-72, and Cys-62/Cys-70.

This sequence belongs to the neurotoxin 37 family. Expressed by the venom gland.

It localises to the secreted. The chain is U9-agatoxin-Ao1a from Agelena orientalis (Funnel-web spider).